The following is a 282-amino-acid chain: Putative phosphite transport system permease protein HtxC (282 aa).

4 helical membrane-spanning segments follow: residues 23–43 (HFATSVVVLSLLAVAWYVCQI), 81–101 (LAMATIGTIFATIIAFPLALM), 130–150 (VYALVFVAAVGFGPFSGVLAI), and 239–259 (FNKMITVLAVVLLMVSAIDFI). Residues 77 to 260 (AGETLAMATI…LMVSAIDFIS (184 aa)) enclose the ABC transmembrane type-1 domain.

This sequence belongs to the binding-protein-dependent transport system permease family.

It is found in the cell inner membrane. In terms of biological role, probably forms part of a binding-protein-dependent hypophosphite transporter. This Stutzerimonas stutzeri (Pseudomonas stutzeri) protein is Putative phosphite transport system permease protein HtxC (htxC).